The chain runs to 508 residues: Photosystem II CP47 reaction center protein (508 aa).

The next 6 membrane-spanning stretches (helical) occupy residues 21–36 (AVHI…WAGS), 101–115 (IVFS…IWHW), 140–156 (GIHL…FGAF), 203–218 (IAAG…FHLS), 237–252 (VLSS…AFVV), and 457–472 (TFAL…HGAR).

This sequence belongs to the PsbB/PsbC family. PsbB subfamily. In terms of assembly, PSII is composed of 1 copy each of membrane proteins PsbA, PsbB, PsbC, PsbD, PsbE, PsbF, PsbH, PsbI, PsbJ, PsbK, PsbL, PsbM, PsbT, PsbX, PsbY, PsbZ, Psb30/Ycf12, at least 3 peripheral proteins of the oxygen-evolving complex and a large number of cofactors. It forms dimeric complexes. Requires Binds multiple chlorophylls. PSII binds additional chlorophylls, carotenoids and specific lipids. as cofactor.

The protein localises to the plastid. It localises to the chloroplast thylakoid membrane. One of the components of the core complex of photosystem II (PSII). It binds chlorophyll and helps catalyze the primary light-induced photochemical processes of PSII. PSII is a light-driven water:plastoquinone oxidoreductase, using light energy to abstract electrons from H(2)O, generating O(2) and a proton gradient subsequently used for ATP formation. This chain is Photosystem II CP47 reaction center protein, found in Triticum aestivum (Wheat).